Consider the following 96-residue polypeptide: Co-chaperonin GroES (96 aa).

Belongs to the GroES chaperonin family. As to quaternary structure, heptamer of 7 subunits arranged in a ring. Interacts with the chaperonin GroEL.

The protein resides in the cytoplasm. Functionally, together with the chaperonin GroEL, plays an essential role in assisting protein folding. The GroEL-GroES system forms a nano-cage that allows encapsulation of the non-native substrate proteins and provides a physical environment optimized to promote and accelerate protein folding. GroES binds to the apical surface of the GroEL ring, thereby capping the opening of the GroEL channel. This is Co-chaperonin GroES from Solidesulfovibrio magneticus (strain ATCC 700980 / DSM 13731 / RS-1) (Desulfovibrio magneticus).